A 479-amino-acid polypeptide reads, in one-letter code: Protein C-ets-2 (479 aa).

The PNT domain maps to 88–173 (DTFSGFTKEQ…EHLEQMIKDS (86 aa)). A DNA-binding region (ETS) is located at residues 373–453 (IQLWQFLLEL…SGKRYVYRFV (81 aa)).

The protein belongs to the ETS family.

The protein resides in the nucleus. Its function is as follows. Probable transcription factor. This chain is Protein C-ets-2 (ETS2), found in Gallus gallus (Chicken).